We begin with the raw amino-acid sequence, 336 residues long: Lipoyl synthase (336 aa).

The [4Fe-4S] cluster site is built by cysteine 81, cysteine 86, cysteine 92, cysteine 107, cysteine 111, cysteine 114, and serine 323. The 220-residue stretch at phenylalanine 93–serine 312 folds into the Radical SAM core domain.

Belongs to the radical SAM superfamily. Lipoyl synthase family. It depends on [4Fe-4S] cluster as a cofactor.

It is found in the cytoplasm. The enzyme catalyses [[Fe-S] cluster scaffold protein carrying a second [4Fe-4S](2+) cluster] + N(6)-octanoyl-L-lysyl-[protein] + 2 oxidized [2Fe-2S]-[ferredoxin] + 2 S-adenosyl-L-methionine + 4 H(+) = [[Fe-S] cluster scaffold protein] + N(6)-[(R)-dihydrolipoyl]-L-lysyl-[protein] + 4 Fe(3+) + 2 hydrogen sulfide + 2 5'-deoxyadenosine + 2 L-methionine + 2 reduced [2Fe-2S]-[ferredoxin]. It functions in the pathway protein modification; protein lipoylation via endogenous pathway; protein N(6)-(lipoyl)lysine from octanoyl-[acyl-carrier-protein]: step 2/2. Functionally, catalyzes the radical-mediated insertion of two sulfur atoms into the C-6 and C-8 positions of the octanoyl moiety bound to the lipoyl domains of lipoate-dependent enzymes, thereby converting the octanoylated domains into lipoylated derivatives. This chain is Lipoyl synthase, found in Stenotrophomonas maltophilia (strain K279a).